The chain runs to 178 residues: uncharacterized protein (178 aa).

The tract at residues 64–103 (GVSDNTNKTTAKDNVSDKSSENEVAQPKQVTPPVDATGNT) is disordered. Positions 73–84 (TAKDNVSDKSSE) are enriched in basic and acidic residues.

This is an uncharacterized protein from Acidianus sp. F28 (AFV-2).